A 255-amino-acid polypeptide reads, in one-letter code: Hemin import ATP-binding protein HmuV (255 aa).

The 237-residue stretch at 2–238 (LQVEGLYLCR…AALKAVYGID (237 aa)) folds into the ABC transporter domain. 34–41 (GPNGAGKS) contributes to the ATP binding site.

Belongs to the ABC transporter superfamily. Heme (hemin) importer (TC 3.A.1.14.5) family. In terms of assembly, the complex is composed of two ATP-binding proteins (HmuV), two transmembrane proteins (HmuU) and a solute-binding protein (HmuT).

Its subcellular location is the cell inner membrane. Its function is as follows. Part of the ABC transporter complex HmuTUV involved in hemin import. Responsible for energy coupling to the transport system. In Pseudomonas putida (strain ATCC 47054 / DSM 6125 / CFBP 8728 / NCIMB 11950 / KT2440), this protein is Hemin import ATP-binding protein HmuV.